We begin with the raw amino-acid sequence, 1405 residues long: Protein translocase subunit SecA (1405 aa).

The protein translocase subunit SecA stretch occupies residues 1–1099; sequence MHMKIKKFKK…SDYKKLNEDE (1099 aa). ATP is bound by residues Gln-88, 106–110, and Asp-494; that span reads GEGKS. Positions 1100–1405 are unknown; sequence SDDDIKAFYK…LDYLKENNKK (306 aa).

It belongs to the SecA family. Monomer and homodimer. Part of the essential Sec protein translocation apparatus which comprises SecA, SecYEG and auxiliary proteins SecDF. Other proteins may also be involved.

The protein resides in the cell membrane. It localises to the cytoplasm. The catalysed reaction is ATP + H2O + cellular proteinSide 1 = ADP + phosphate + cellular proteinSide 2.. Part of the Sec protein translocase complex. Interacts with the SecYEG preprotein conducting channel. Has a central role in coupling the hydrolysis of ATP to the transfer of proteins into and across the cell membrane, serving as an ATP-driven molecular motor driving the stepwise translocation of polypeptide chains across the membrane. This Malacoplasma penetrans (strain HF-2) (Mycoplasma penetrans) protein is Protein translocase subunit SecA.